The following is a 280-amino-acid chain: tRNA dimethylallyltransferase (280 aa).

9–16 (GPTGSGKT) contributes to the ATP binding site. 11–16 (TGSGKT) serves as a coordination point for substrate. Positions 34–37 (DSVS) are interaction with substrate tRNA.

The protein belongs to the IPP transferase family. In terms of assembly, monomer. It depends on Mg(2+) as a cofactor.

The catalysed reaction is adenosine(37) in tRNA + dimethylallyl diphosphate = N(6)-dimethylallyladenosine(37) in tRNA + diphosphate. Catalyzes the transfer of a dimethylallyl group onto the adenine at position 37 in tRNAs that read codons beginning with uridine, leading to the formation of N6-(dimethylallyl)adenosine (i(6)A). This is tRNA dimethylallyltransferase from Acholeplasma laidlawii (strain PG-8A).